We begin with the raw amino-acid sequence, 417 residues long: Tyrosine aminotransferase (417 aa).

Residue K249 is modified to N6-(pyridoxal phosphate)lysine.

This sequence belongs to the class-I pyridoxal-phosphate-dependent aminotransferase family. Homodimer. Pyridoxal 5'-phosphate serves as cofactor.

The catalysed reaction is L-tyrosine + 2-oxoglutarate = 3-(4-hydroxyphenyl)pyruvate + L-glutamate. The protein operates within amino-acid degradation; L-phenylalanine degradation; acetoacetate and fumarate from L-phenylalanine: step 2/6. In terms of biological role, transaminase involved in tyrosine breakdown. Converts tyrosine to p-hydroxyphenylpyruvate. Has much lower affinity and transaminase activity towards phenylalanine. The sequence is that of Tyrosine aminotransferase (tat) from Dictyostelium discoideum (Social amoeba).